Consider the following 278-residue polypeptide: HTH-type transcriptional activator RhaS (278 aa).

The 99-residue stretch at asparagine 174–glycine 272 folds into the HTH araC/xylS-type domain. 2 consecutive DNA-binding regions (H-T-H motif) follow at residues aspartate 191–threonine 212 and valine 239–phenylalanine 262.

In terms of assembly, binds DNA as a dimer.

It is found in the cytoplasm. Its function is as follows. Activates expression of the rhaBAD and rhaT operons. This chain is HTH-type transcriptional activator RhaS, found in Escherichia coli O81 (strain ED1a).